A 1218-amino-acid chain; its full sequence is NACHT, LRR and PYD domains-containing protein 1 allele 2 (1218 aa).

The interval 1–61 (MEESQSKQES…SLPGWSSTSK (61 aa)) is disordered. The span at 7–29 (KQESNTRVAQHGSQQDVDPTFQT) shows a compositional bias: polar residues. The 310-residue stretch at 175 to 484 (QLVIIEGAAG…EFFAAMSYIL (310 aa)) folds into the NACHT domain. 181–188 (GAAGIGKS) serves as a coordination point for ATP. LRR repeat units follow at residues 343–364 (KERN…LTLC), 673–693 (NLEE…RSLC), and 730–750 (RLAE…RQLC). Polar residues predominate over residues 799-815 (TMPTENTDGEESLTSSK). Positions 799–842 (TMPTENTDGEESLTSSKQQQQQSGDKHMEPLGTDDDFWGPSGPV) are disordered. The segment at 835–968 (FWGPSGPVST…HFAVLENPSF (134 aa)) is ZU5. The 284-residue stretch at 835–1118 (FWGPSGPVST…LRPALPRMAS (284 aa)) folds into the FIIND domain. The UPA stretch occupies residues 969 to 1118 (SPMGVLLRMI…LRPALPRMAS (150 aa)). One can recognise a CARD domain in the interval 1122–1211 (DAPALLHFVD…HLIMDLLEKS (90 aa)).

It belongs to the NLRP family. In terms of assembly, interacts (via LRR repeats) with BCL2 and BCL2L1 (via the loop between motifs BH4 and BH3). Interacts with NOD2; this interaction is enhanced in the presence of muramyl dipeptide (MDP) and increases IL1B release. Interacts with EIF2AK2/PKR; this interaction requires EIF2AK2 activity, is accompanied by EIF2AK2 autophosphorylation and promotes inflammasome assembly in response to danger-associated signals. Interacts with MEFV; this interaction targets Nlrp1a to degradation by autophagy, hence preventing excessive IL1B- and IL18-mediated inflammation. Interacts with DPP9; leading to inhibit activation of the inflammasome. DPP9 acts via formation of a ternary complex, composed of a DPP9 homodimer, one full-length NLRP1 protein, and one cleaved C-terminus of Nlrp1a (NACHT, LRR and PYD domains-containing protein 1a, C-terminus). Interacts with DPP8; leading to inhibit activation of the inflammasome, probably via formation of a ternary complex with DPP8. As to quaternary structure, interacts with the C-terminal part of Nlrp1a (NACHT, LRR and PYD domains-containing protein 1a, C-terminus) in absence of pathogens and other damage-associated signals. Interacts with the N-terminal part of Nlrp1a (NACHT, LRR and PYD domains-containing protein 1a, N-terminus) in absence of pathogens and other damage-associated signals. Homomultimer; forms the Nlrp1a inflammasome polymeric complex, a filament composed of homopolymers of this form in response to pathogens and other damage-associated signals. The Nlrp1a inflammasome polymeric complex directly recruits pro-caspase-1 (proCASP1) independently of PYCARD/ASC. Interacts (via CARD domain) with CASP1 (via CARD domain); leading to CASP1 activation. Autocatalytically cleaved. Autocatalytic cleavage in FIIND region occurs constitutively, prior to activation signals, and is required for inflammasome activity (IL1B release), possibly by facilitating CASP1 binding. Both N- and C-terminal parts remain associated non-covalently. In terms of processing, (Microbial infection) Cleavage by B.anthracis lethal toxin (LT) endopeptidase promotes ubiquitination and degradation of the N-terminal part, releasing the cleaved C-terminal part of the protein (NACHT, LRR and PYD domains-containing protein 1a, C-terminus), which polymerizes and forms the Nlrp1a inflammasome. Post-translationally, ubiquitinated in response to pathogen-associated signals, leading to its degradation by the proteasome and subsequent release of the cleaved C-terminal part of the protein (NACHT, LRR and PYD domains-containing protein 1a, C-terminus), which polymerizes and forms the Nlrp1a inflammasome.

It localises to the cytoplasm. It is found in the cytosol. The protein localises to the nucleus. Its subcellular location is the inflammasome. Activated by cleavage by B.anthracis lethal toxin (LT) endopeptidase. Cleavage by LT promotes ubiquitination and degradation of the N-terminal part, releasing the cleaved C-terminal part of the protein (NACHT, LRR and PYD domains-containing protein 1a, C-terminus), which polymerizes and forms the Nlrp1a inflammasome. Nlrp1a inflammasome is inhibited by DPP8 and DPP9, which sequester the C-terminal fragment of Nlrp1a (NACHT, LRR and PYD domains-containing protein 1a, C-terminus) in a ternary complex, thereby preventing Nlrp1a oligomerization and activation. Nlrp1a inflammasome is weakly activated by Val-boroPro (Talabostat, PT-100), an inhibitor of dipeptidyl peptidases DPP8 and DPP9. Val-boroPro relieves inhibition of DPP8 and/or DPP9 by promoting disruption of the ternary complex, releasing its C-terminal part from autoinhibition. Weakly activated by Toxoplasma gondii. In terms of biological role, acts as the sensor component of the Nlrp1a inflammasome, which mediates inflammasome activation in response to various pathogen-associated signals, leading to subsequent pyroptosis. Inflammasomes are supramolecular complexes that assemble in the cytosol in response to pathogens and other damage-associated signals and play critical roles in innate immunity and inflammation. Acts as a recognition receptor (PRR): recognizes specific pathogens and other damage-associated signals, such as B.anthracis lethal toxin (LT) or Val-boroPro inhibitor, and mediates the formation of the inflammasome polymeric complex. In response to pathogen-associated signals, the N-terminal part of Nlrp1a is degraded by the proteasome, releasing the cleaved C-terminal part of the protein (NACHT, LRR and PYD domains-containing protein 1a, C-terminus), which polymerizes to initiate the formation of the inflammasome complex: the inflammasome directly recruits pro-caspase-1 (proCASP1) independently of PYCARD/ASC and promotes caspase-1 (CASP1) activation, which subsequently cleaves and activates inflammatory cytokines IL1B and IL18 and gasdermin-D (GSDMD), leading to pyroptosis. In the absence of GSDMD expression, the Nlrp1a inflammasome is able to recruit and activate CASP8, leading to activation of gasdermin-E (GSDME). Constitutes the precursor of the Nlrp1a inflammasome, which mediates autoproteolytic processing within the FIIND domain to generate the N-terminal and C-terminal parts, which are associated non-covalently in absence of pathogens and other damage-associated signals. Functionally, regulatory part that prevents formation of the Nlrp1a inflammasome: in absence of pathogens and other damage-associated signals, interacts with the C-terminal part of Nlrp1a (NACHT, LRR and PYD domains-containing protein 1a, C-terminus), preventing activation of the Nlrp1a inflammasome. In response to pathogen-associated signals, this part is ubiquitinated by the N-end rule pathway and degraded by the proteasome, releasing the cleaved C-terminal part of the protein, which polymerizes and forms the Nlrp1a inflammasome. Its function is as follows. Constitutes the active part of the Nlrp1a inflammasome. In absence of pathogens and other damage-associated signals, interacts with the N-terminal part of Nlrp1a (NACHT, LRR and PYD domains-containing protein 1a, N-terminus), preventing activation of the Nlrp1a inflammasome. In response to pathogen-associated signals, the N-terminal part of Nlrp1a is degraded by the proteasome, releasing this form, which polymerizes to form the Nlrp1a inflammasome complex: the Nlrp1a inflammasome complex then directly recruits pro-caspase-1 (proCASP1) and promotes caspase-1 (CASP1) activation, leading to gasdermin-D (GSDMD) cleavage and subsequent pyroptosis. This chain is NACHT, LRR and PYD domains-containing protein 1 allele 2, found in Rattus norvegicus (Rat).